The sequence spans 612 residues: Dihydroxy-acid dehydratase (612 aa).

D81 contributes to the Mg(2+) binding site. Residue C122 coordinates [2Fe-2S] cluster. Mg(2+) contacts are provided by D123 and K124. Residue K124 is modified to N6-carboxylysine. C195 contacts [2Fe-2S] cluster. E491 lines the Mg(2+) pocket. S517 serves as the catalytic Proton acceptor.

The protein belongs to the IlvD/Edd family. Homodimer. It depends on [2Fe-2S] cluster as a cofactor. The cofactor is Mg(2+).

It catalyses the reaction (2R)-2,3-dihydroxy-3-methylbutanoate = 3-methyl-2-oxobutanoate + H2O. It carries out the reaction (2R,3R)-2,3-dihydroxy-3-methylpentanoate = (S)-3-methyl-2-oxopentanoate + H2O. The protein operates within amino-acid biosynthesis; L-isoleucine biosynthesis; L-isoleucine from 2-oxobutanoate: step 3/4. It functions in the pathway amino-acid biosynthesis; L-valine biosynthesis; L-valine from pyruvate: step 3/4. Its function is as follows. Functions in the biosynthesis of branched-chain amino acids. Catalyzes the dehydration of (2R,3R)-2,3-dihydroxy-3-methylpentanoate (2,3-dihydroxy-3-methylvalerate) into 2-oxo-3-methylpentanoate (2-oxo-3-methylvalerate) and of (2R)-2,3-dihydroxy-3-methylbutanoate (2,3-dihydroxyisovalerate) into 2-oxo-3-methylbutanoate (2-oxoisovalerate), the penultimate precursor to L-isoleucine and L-valine, respectively. This chain is Dihydroxy-acid dehydratase, found in Rhizobium meliloti (strain 1021) (Ensifer meliloti).